The chain runs to 148 residues: Ribosome maturation factor RimP (148 aa).

Belongs to the RimP family.

The protein resides in the cytoplasm. Its function is as follows. Required for maturation of 30S ribosomal subunits. The chain is Ribosome maturation factor RimP from Thermosipho africanus (strain TCF52B).